Consider the following 311-residue polypeptide: Cell division protein FtsQ (311 aa).

The segment at 1–28 is disordered; the sequence is MTTRSPARPLIARRSTPAPTPAPHDPAP. The Cytoplasmic portion of the chain corresponds to 1 to 46; the sequence is MTTRSPARPLIARRSTPAPTPAPHDPAPSRLSYRVTRLWLTPIFRK. Residues 47-67 form a helical membrane-spanning segment; that stretch reads ALHLGIPVFALFAAVTWYLGD. Residues 68 to 311 lie on the Periplasmic side of the membrane; that stretch reads ETRVAELFEA…AERPDGDTRG (244 aa). A POTRA domain is found at 91–159; sequence FRVNVLGIDG…GYLAVRIDER (69 aa).

This sequence belongs to the FtsQ/DivIB family. FtsQ subfamily.

It is found in the cell inner membrane. Functionally, essential cell division protein. The protein is Cell division protein FtsQ of Jannaschia sp. (strain CCS1).